A 259-amino-acid chain; its full sequence is Indole-3-glycerol phosphate synthase (259 aa).

The protein belongs to the TrpC family.

It carries out the reaction 1-(2-carboxyphenylamino)-1-deoxy-D-ribulose 5-phosphate + H(+) = (1S,2R)-1-C-(indol-3-yl)glycerol 3-phosphate + CO2 + H2O. It functions in the pathway amino-acid biosynthesis; L-tryptophan biosynthesis; L-tryptophan from chorismate: step 4/5. The polypeptide is Indole-3-glycerol phosphate synthase (Rhodopirellula baltica (strain DSM 10527 / NCIMB 13988 / SH1)).